The following is a 603-amino-acid chain: Multicopper oxidase MCE (603 aa).

A signal peptide spans 1–21; it reads MNTFICSALICLSWLPGFIQA. In terms of domain architecture, Plastocyanin-like 1 spans 30-144; the sequence is ITYAKGAPDG…YGALWIRPKE (115 aa). Asn75 carries an N-linked (GlcNAc...) asparagine glycan. His79, His81, His123, and His125 together coordinate Cu cation. N-linked (GlcNAc...) asparagine glycans are attached at residues Asn155, Asn180, Asn235, Asn256, Asn272, Asn275, Asn388, Asn394, Asn413, and Asn455. Positions 173–353 constitute a Plastocyanin-like 2 domain; the sequence is LIVSDWSNFT…TPGDYTIRLP (181 aa). The region spanning 450-581 is the Plastocyanin-like 3 domain; that stretch reads LLYNPNSTAA…GGMAGVIMDG (132 aa). His495 is a binding site for Cu cation. Asn512 and Asn595 each carry an N-linked (GlcNAc...) asparagine glycan.

It belongs to the multicopper oxidase family.

It carries out the reaction 4 monapinone A + O2 = 2 dinapinone A + 2 H2O. The catalysed reaction is 4 monapinone E + O2 = 2 dinapinone E + 2 H2O. It participates in secondary metabolite biosynthesis. Multicopper oxidase; part of the gene cluster that mediates the biosynthesis of dinapinones DPA1 (or (M)-DPA) and DPA2 (or (P)-DPA), biaryl dihydronaphthopyranones that act in concert as inhibitors of triacylglycerol accumulation in mammalian cells. The first step in the pathway corresponds to the biosynthesis of dihydroxy-decanoyl-CoA by the fungal type I fatty acid synthase (formed by ORF4 and ORF5). The cluster-specific polyketide synthase (ORF7) then accepts and extends dihydroxy-decanoyl-CoA with 6 malonyl-CoA moieties and cyclizes the molecule to produce a putative polyhydroxynaphthopyranone intermediate, which is further methylated by the cluster-specific methyltransferase (ORF1) at 7-OH to produce monapinone A (MPA). MCE catalyzes the regioselective biaryl coupling of monapinone A (MPA) at the 8,8'-positions to afford dimeric atropisomers DPA1 and DPA2 in a ratio of approximately 1:2.5. Monapinone E (MPE) also appears to be a substrate for MCE and provides the atropisomers dinapinones DPE1 (or (M)-DPE) and DPE2 (or (P)-DPE). The chain is Multicopper oxidase MCE from Talaromyces pinophilus (Penicillium pinophilum).